A 618-amino-acid chain; its full sequence is Serine--tRNA ligase, cytoplasmic (618 aa).

Position 417-419 (417-419) interacts with L-serine; sequence TSE. ATP is bound at residue 448 to 450; that stretch reads RTE. E472 contributes to the L-serine binding site. An ATP-binding site is contributed by 536-539; it reads EVSS. S570 is an L-serine binding site.

Belongs to the class-II aminoacyl-tRNA synthetase family. Type-1 seryl-tRNA synthetase subfamily. As to quaternary structure, homodimer. The tRNA molecule binds across the dimer.

It is found in the cytoplasm. It carries out the reaction tRNA(Ser) + L-serine + ATP = L-seryl-tRNA(Ser) + AMP + diphosphate + H(+). It catalyses the reaction tRNA(Sec) + L-serine + ATP = L-seryl-tRNA(Sec) + AMP + diphosphate + H(+). It functions in the pathway aminoacyl-tRNA biosynthesis; selenocysteinyl-tRNA(Sec) biosynthesis; L-seryl-tRNA(Sec) from L-serine and tRNA(Sec): step 1/1. In terms of biological role, catalyzes the attachment of serine to tRNA(Ser). Is also able to aminoacylate tRNA(Sec) with serine, to form the misacylated tRNA L-seryl-tRNA(Sec), which will be further converted into selenocysteinyl-tRNA(Sec). The polypeptide is Serine--tRNA ligase, cytoplasmic (Plasmodium falciparum (isolate 3D7)).